Here is a 373-residue protein sequence, read N- to C-terminus: Putative aminopeptidase SgcX (373 aa).

Residues H67 and D180 each contribute to the a divalent metal cation site. Catalysis depends on E212, which acts as the Proton acceptor. E213, D235, and H329 together coordinate a divalent metal cation.

The protein belongs to the peptidase M42 family. The cofactor is a divalent metal cation.

In Escherichia coli (strain K12), this protein is Putative aminopeptidase SgcX (sgcX).